The primary structure comprises 361 residues: MQKIVQNQTTESLIRKDLQKFSAYSSARSLKVDGDIWLNANESPYNDEYLYNRYPEPQPRKLVEKLAKIYDVDASNILVTRGSDEGIDLLFRLYCEYQKDSAFAVEPTFGMYKIAAQLQGVDYKTLKLKEENNFEINITELLANIPDNCKLLFLCTPNNPTGKSIPLADIEQILSELAGNCVVVVDEAYIEFSNEKSVSSIINKYENLVVLRTLSKSFGMAGLRLGVVITNSDRIVWLRKILAPYPIPKTTESTILAMLDDENLANIASQIIEIKEQREHLYQALSQMKIVDKLWSSDANFILVRFRESIFNKLIDNKIVVRSMAHFFNDEKVLRISIGTVSENKRLIEVLQKLSSEYETK.

The residue at position 216 (Lys-216) is an N6-(pyridoxal phosphate)lysine.

Belongs to the class-II pyridoxal-phosphate-dependent aminotransferase family. Histidinol-phosphate aminotransferase subfamily. In terms of assembly, homodimer. It depends on pyridoxal 5'-phosphate as a cofactor.

The enzyme catalyses L-histidinol phosphate + 2-oxoglutarate = 3-(imidazol-4-yl)-2-oxopropyl phosphate + L-glutamate. It participates in amino-acid biosynthesis; L-histidine biosynthesis; L-histidine from 5-phospho-alpha-D-ribose 1-diphosphate: step 7/9. The sequence is that of Histidinol-phosphate aminotransferase from Francisella philomiragia subsp. philomiragia (strain ATCC 25017 / CCUG 19701 / FSC 153 / O#319-036).